The following is a 258-amino-acid chain: Pyridoxine 5'-phosphate synthase (258 aa).

N6 contacts 3-amino-2-oxopropyl phosphate. 1-deoxy-D-xylulose 5-phosphate is bound at residue 8-9; it reads DH. R17 contributes to the 3-amino-2-oxopropyl phosphate binding site. H42 acts as the Proton acceptor in catalysis. 1-deoxy-D-xylulose 5-phosphate contacts are provided by R44 and H49. E69 acts as the Proton acceptor in catalysis. T99 is a binding site for 1-deoxy-D-xylulose 5-phosphate. The active-site Proton donor is H213. Residues G214 and 235–236 contribute to the 3-amino-2-oxopropyl phosphate site; that span reads GQ.

The protein belongs to the PNP synthase family. As to quaternary structure, homooctamer; tetramer of dimers.

The protein localises to the cytoplasm. The enzyme catalyses 3-amino-2-oxopropyl phosphate + 1-deoxy-D-xylulose 5-phosphate = pyridoxine 5'-phosphate + phosphate + 2 H2O + H(+). It participates in cofactor biosynthesis; pyridoxine 5'-phosphate biosynthesis; pyridoxine 5'-phosphate from D-erythrose 4-phosphate: step 5/5. Its function is as follows. Catalyzes the complicated ring closure reaction between the two acyclic compounds 1-deoxy-D-xylulose-5-phosphate (DXP) and 3-amino-2-oxopropyl phosphate (1-amino-acetone-3-phosphate or AAP) to form pyridoxine 5'-phosphate (PNP) and inorganic phosphate. The protein is Pyridoxine 5'-phosphate synthase of Sulfurovum sp. (strain NBC37-1).